Here is a 655-residue protein sequence, read N- to C-terminus: RalA-binding protein 1-A (655 aa).

A disordered region spans residues 1–153 (MTECFLPPAS…KKSKDLTAAD (153 aa)). A compositionally biased stretch (basic and acidic residues) spans 52–68 (DILHEPPDIVSEDEKDH). 69 to 74 (GKKKGK) is an ATP binding site. Composition is skewed to basic residues over residues 69–79 (GKKKGKFKKKE) and 102–118 (KIKR…PSFS). The nuclear localization signal stretch occupies residues 102–119 (KIKRSKGIHVFKKPSFSK). Residues 119-150 (KKKEKDFKIKEKPKEEKHKEDKHKEKKSKDLT) show a composition bias toward basic and acidic residues. 2 consecutive repeat copies span residues 133-137 (EEKHK) and 138-142 (EDKHK). The interval 133–142 (EEKHKEDKHK) is 2 X 5 AA tandem repeats of E-[D/E]-K-H-K. The segment at 149-214 (LTAADVVKQW…PLVFRECIDF (66 aa)) is mediates association with membranes and could form transmembrane domains. The Rho-GAP domain occupies 187-383 (IPLIEAAERT…PLRWSNMATM (197 aa)). Residues 398–495 (RRQEFLLNCL…LTEQEELVAM (98 aa)) are mediates interaction with RALA and RALB. 413–420 (AGVKDLSK) is an ATP binding site. Residues 494–510 (AMEQYLRRQIATEKEEI) form a required to maintain nuclear localization region. The mediates interaction with REPS1 and REPS2 stretch occupies residues 496–655 (EQYLRRQIAT…GKKLSSETLI (160 aa)). Disordered stretches follow at residues 520–548 (IQSR…EEEL) and 600–655 (LQEE…ETLI). Residues 532–548 (EEYSSESESESEDEEEL) show a composition bias toward acidic residues. The span at 619-630 (NLPETKAPKDQP) shows a compositional bias: basic and acidic residues.

As to quaternary structure, interacts with the active, GTP-bound form of ralB and ralA.

The protein localises to the cell membrane. It is found in the cytoplasm. The protein resides in the cytosol. Its subcellular location is the cytoskeleton. It localises to the spindle pole. The protein localises to the nucleus. It is found in the mitochondrion. The protein resides in the cell projection. Its subcellular location is the lamellipodium. It carries out the reaction an S-substituted glutathione(in) + ATP + H2O = an S-substituted glutathione(out) + ADP + phosphate + H(+). It catalyses the reaction ATP + H2O + xenobioticSide 1 = ADP + phosphate + xenobioticSide 2.. The catalysed reaction is leukotriene C4(in) + ATP + H2O = leukotriene C4(out) + ADP + phosphate + H(+). In terms of biological role, multifunctional protein that functions as a downstream effector of ralA and ralB. As a GTPase-activating protein/GAP can inactivate CDC42 and RAC1 by stimulating their GTPase activity. As part of the Ral signaling pathway, may also regulate ligand-dependent EGF and insulin receptors-mediated endocytosis. During mitosis, may act as a scaffold protein in the phosphorylation of EPSIN/EPN1 by the mitotic kinase cyclin B-CDK1, preventing endocytosis during that phase of the cell cycle. During mitosis, also controls mitochondrial fission as an effector of ralA. Recruited to mitochondrion by ralA, acts as a scaffold to foster the mitotic kinase cyclin B-CDK1-mediated phosphorylation and activation of DNM1L. Acts on the cytoskeleton, to regulate pigment distribution and to regulate gastrulation. Its function is as follows. Could also function as a primary ATP-dependent active transporter for glutathione conjugates of electrophiles. May also actively catalyze the efflux of a wide range of substrates including xenobiotics like doxorubicin (DOX) contributing to cell multidrug resistance. The protein is RalA-binding protein 1-A (ralbp1-a) of Xenopus laevis (African clawed frog).